Reading from the N-terminus, the 115-residue chain is uncharacterized protein (115 aa).

This is an uncharacterized protein from Acidianus convivator (ATV).